Reading from the N-terminus, the 299-residue chain is Glycine--tRNA ligase alpha subunit (299 aa).

The protein belongs to the class-II aminoacyl-tRNA synthetase family. As to quaternary structure, tetramer of two alpha and two beta subunits.

It is found in the cytoplasm. The enzyme catalyses tRNA(Gly) + glycine + ATP = glycyl-tRNA(Gly) + AMP + diphosphate. The polypeptide is Glycine--tRNA ligase alpha subunit (Laribacter hongkongensis (strain HLHK9)).